A 342-amino-acid chain; its full sequence is RNA 3'-terminal phosphate cyclase (342 aa).

ATP-binding positions include Q103 and 283–287 (YLADQ). Residue H308 is the Tele-AMP-histidine intermediate of the active site.

Belongs to the RNA 3'-terminal cyclase family. Type 1 subfamily.

It localises to the cytoplasm. It carries out the reaction a 3'-end 3'-phospho-ribonucleotide-RNA + ATP = a 3'-end 2',3'-cyclophospho-ribonucleotide-RNA + AMP + diphosphate. Catalyzes the conversion of 3'-phosphate to a 2',3'-cyclic phosphodiester at the end of RNA. The mechanism of action of the enzyme occurs in 3 steps: (A) adenylation of the enzyme by ATP; (B) transfer of adenylate to an RNA-N3'P to produce RNA-N3'PP5'A; (C) and attack of the adjacent 2'-hydroxyl on the 3'-phosphorus in the diester linkage to produce the cyclic end product. The biological role of this enzyme is unknown but it is likely to function in some aspects of cellular RNA processing. This Escherichia coli O157:H7 protein is RNA 3'-terminal phosphate cyclase (rtcA).